The chain runs to 381 residues: MTETQSLELAKALISRPSVTPDDRDCQKLLAERLHKIGFAAEELHFGDTKNIWLRRGTKAPVVCFAGHTDVVPTGPVEKWDSPPFEPTERDGRLYGRGAADMKTSIACFVTACERFVAEHPDHQGSIALLITSDEEGDALDGTTKVVDVLKARGELIDYCIVGEPTAVDKLGDMIKNGRRGSLSGSLTVKGKQGHIAYPHLAVNPIHTFAPALLELTQEIWDEGNEYFPPTSFQISNINGGTGATNVIPGELNVKFNFRFSTESTETGLKQRVHAILDKHGVQYDLQWSCSGQPFLTHAGKLTDVARTAIAETCGVEAELSTTGGTSDGRFIKAIAKELIELGPSNATIHQINENVRLDDIPKLSAVYERILARLLAEKAV.

His-68 serves as a coordination point for Zn(2+). Asp-70 is an active-site residue. Zn(2+) is bound at residue Asp-101. Glu-135 functions as the Proton acceptor in the catalytic mechanism. Positions 136, 164, and 350 each coordinate Zn(2+).

It belongs to the peptidase M20A family. DapE subfamily. Homodimer. The cofactor is Zn(2+). It depends on Co(2+) as a cofactor.

The catalysed reaction is N-succinyl-(2S,6S)-2,6-diaminopimelate + H2O = (2S,6S)-2,6-diaminopimelate + succinate. It participates in amino-acid biosynthesis; L-lysine biosynthesis via DAP pathway; LL-2,6-diaminopimelate from (S)-tetrahydrodipicolinate (succinylase route): step 3/3. Catalyzes the hydrolysis of N-succinyl-L,L-diaminopimelic acid (SDAP), forming succinate and LL-2,6-diaminopimelate (DAP), an intermediate involved in the bacterial biosynthesis of lysine and meso-diaminopimelic acid, an essential component of bacterial cell walls. In Neisseria gonorrhoeae (strain ATCC 700825 / FA 1090), this protein is Succinyl-diaminopimelate desuccinylase.